Consider the following 599-residue polypeptide: Cytosolic Fe-S cluster assembly factor nar1 (599 aa).

8 residues coordinate [4Fe-4S] cluster: Cys-20, Cys-62, Cys-65, Cys-68, Cys-210, Cys-265, Cys-468, and Cys-472.

It belongs to the NARF family.

In terms of biological role, component of the cytosolic Fe/S protein assembly machinery. Required for maturation of extramitochondrial Fe/S proteins. May play a role in the transfer of pre-assembled Fe/S clusters to target apoproteins. This is Cytosolic Fe-S cluster assembly factor nar1 (nar1) from Aspergillus terreus (strain NIH 2624 / FGSC A1156).